The primary structure comprises 368 residues: UV excision repair protein rhp23 (368 aa).

In terms of domain architecture, Ubiquitin-like spans 1-77 (MNLTFKNLQQ…IVCMVSRPKT (77 aa)). Composition is skewed to low complexity over residues 76-88 (KTST…AASP) and 103-124 (APSS…AAPS). A disordered region spans residues 76–134 (KTSTSTPKSAASPAPNPPASVPEKKVEAPSSTVAESTSTTQTVAAAAPSNPDTTATSEA). 2 positions are modified to phosphoserine: S84 and S87. UBA domains lie at 135–185 (PIDA…LLTG) and 320–360 (QEES…LFEH). S364 is subject to Phosphoserine.

The protein resides in the nucleus. Involved in postreplication repair of UV-damaged DNA. Postreplication repair functions in gap-filling of a daughter strand on replication of damaged DNA. Functionally, protects ubiquitin chains against dissambly by deubiquitinating enzymes thereby promoting protein degradation. The chain is UV excision repair protein rhp23 (rhp23) from Schizosaccharomyces pombe (strain 972 / ATCC 24843) (Fission yeast).